Here is a 588-residue protein sequence, read N- to C-terminus: Histone deacetylase 9 (588 aa).

At Ser22 the chain carries Phosphoserine. The interval 23 to 27 (PLDLR) is interaction with CTBP1. Positions 110 to 147 (RQEQEVERHRREQQLPPLRGKDRGRERAVASTEVKQKL) are enriched in basic and acidic residues. Disordered stretches follow at residues 110 to 170 (RQEQ…HSVG), 183 to 242 (TSLD…SSPL), and 264 to 301 (SSVS…PHPE). An interaction with MEF2 region spans residues 136–154 (RAVASTEVKQKLQEFLLSK). 2 stretches are compositionally biased toward polar residues: residues 154 to 166 (KSAT…NGKN) and 185 to 199 (LDQS…SPSY). An interaction with MAPK10 region spans residues 175 to 343 (LWYTAAHHTS…LPAVPSPLNA (169 aa)). Over residues 208 to 219 (DSKDDFPLRKTA) the composition is skewed to basic and acidic residues. An interaction with ETV6 region spans residues 218 to 261 (TASEPNLKVRSRLKQKVAERRSSPLLRRKDGNLVTSFKKRVFEV). Ser220 bears the Phosphoserine mark. The segment covering 233-242 (KVAERRSSPL) has biased composition (basic and acidic residues). Ser240 carries the post-translational modification Phosphoserine; by DYRK1B. The span at 264-284 (SSVSSSSPGSGPSSPNNGPAG) shows a compositional bias: low complexity. A Phosphoserine modification is found at Ser450. Residues 493 to 533 (QLKQPGSHLEEAEEELQGDQSMEDRAASKDNSARSDSSACV) are disordered. Basic and acidic residues predominate over residues 514 to 525 (MEDRAASKDNSA). Ser552 is modified (phosphoserine).

This sequence belongs to the histone deacetylase family. HD type 2 subfamily. In terms of assembly, homodimer. Interacts with ETV6. Interacts with MEF2, HDAC1, HDAC3, HDAC4, HDAC5, CTBP1 and MAPK10. The phosphorylated form interacts with 14-3-3. Interacts with FOXP3 in the absence of T-cell stimulation. In terms of processing, sumoylated. Post-translationally, phosphorylated on Ser-220 and Ser-450; which promotes 14-3-3-binding, impairs interaction with MEF2, and antagonizes antimyogenic activity. Phosphorylated on Ser-240 by DYRK1B; which impairs nuclear accumulation. Phosphorylated by the PKC kinases PKN1 and PKN2, impairing nuclear import. As to expression, expressed at high levels in heart, brain and spleen. Expressed in skeletal muscle.

It is found in the nucleus. The catalysed reaction is N(6)-acetyl-L-lysyl-[histone] + H2O = L-lysyl-[histone] + acetate. In terms of biological role, devoided of intrinsic deacetylase activity, promotes the deacetylation of lysine residues on the N-terminal part of the core histones (H2A, H2B, H3 and H4) by recruiting HDAC1 and HDAC3. Histone deacetylation gives a tag for epigenetic repression and plays an important role in transcriptional regulation, cell cycle progression and developmental events. Represses MEF2-dependent transcription, inhibits skeletal myogenesis and may be involved in heart development. Protects neurons from apoptosis, both by inhibiting JUN phosphorylation by MAPK10 and by repressing JUN transcription via HDAC1 recruitment to JUN promoter. The polypeptide is Histone deacetylase 9 (Hdac9) (Mus musculus (Mouse)).